The following is a 1108-amino-acid chain: DNA-directed RNA polymerase subunit beta (1108 aa).

Belongs to the RNA polymerase beta chain family. In plastids the minimal PEP RNA polymerase catalytic core is composed of four subunits: alpha, beta, beta', and beta''. When a (nuclear-encoded) sigma factor is associated with the core the holoenzyme is formed, which can initiate transcription.

Its subcellular location is the plastid. The protein localises to the chloroplast. It carries out the reaction RNA(n) + a ribonucleoside 5'-triphosphate = RNA(n+1) + diphosphate. Functionally, DNA-dependent RNA polymerase catalyzes the transcription of DNA into RNA using the four ribonucleoside triphosphates as substrates. The polypeptide is DNA-directed RNA polymerase subunit beta (Gnetum parvifolium (Small-leaved jointfir)).